Here is a 163-residue protein sequence, read N- to C-terminus: NADH-quinone oxidoreductase subunit I (163 aa).

2 4Fe-4S ferredoxin-type domains span residues 54-84 and 94-123; these read LRRY…IESD and TRYD…ETQI. Residues C64, C67, C70, C74, C103, C106, C109, and C113 each coordinate [4Fe-4S] cluster.

Belongs to the complex I 23 kDa subunit family. As to quaternary structure, NDH-1 is composed of 14 different subunits. Subunits NuoA, H, J, K, L, M, N constitute the membrane sector of the complex. [4Fe-4S] cluster is required as a cofactor.

The protein localises to the cell inner membrane. It catalyses the reaction a quinone + NADH + 5 H(+)(in) = a quinol + NAD(+) + 4 H(+)(out). In terms of biological role, NDH-1 shuttles electrons from NADH, via FMN and iron-sulfur (Fe-S) centers, to quinones in the respiratory chain. The immediate electron acceptor for the enzyme in this species is believed to be ubiquinone. Couples the redox reaction to proton translocation (for every two electrons transferred, four hydrogen ions are translocated across the cytoplasmic membrane), and thus conserves the redox energy in a proton gradient. The chain is NADH-quinone oxidoreductase subunit I from Cupriavidus necator (strain ATCC 17699 / DSM 428 / KCTC 22496 / NCIMB 10442 / H16 / Stanier 337) (Ralstonia eutropha).